The sequence spans 402 residues: Propionate kinase (402 aa).

The ATP site is built by N11 and K18. N11 serves as a coordination point for Mg(2+). R86 provides a ligand contact to substrate. The Proton donor/acceptor role is filled by D143. ATP is bound by residues H175, 203–207 (HLGNG), 278–280 (DLR), and 326–330 (GIGEN).

The protein belongs to the acetokinase family. TdcD subfamily. Homodimer. Mg(2+) is required as a cofactor.

The catalysed reaction is propanoate + ATP = propanoyl phosphate + ADP. The protein operates within amino-acid degradation; L-threonine degradation via propanoate pathway; propanoate from L-threonine: step 4/4. Catalyzes the conversion of propionyl phosphate and ADP to propionate and ATP. This chain is Propionate kinase, found in Enterobacter sp. (strain 638).